The following is a 472-amino-acid chain: Transmembrane protein 8B (472 aa).

The disordered stretch occupies residues 1-36; the sequence is MNMPQSLGNQPLPPEPPSLGTPAEGPGTTSPPEHCW. Residues 1-233 lie on the Extracellular side of the membrane; that stretch reads MNMPQSLGNQ…ADALTYGFQL (233 aa). N-linked (GlcNAc...) asparagine glycosylation is found at N92 and N100. Positions 182–221 constitute an EGF-like domain; that stretch reads FLSPCVDDCGPYGQCKLLRTHNYLYAACECKAGWRGWGCT. 3 cysteine pairs are disulfide-bonded: C186/C196, C190/C209, and C211/C220. Residues 234-254 form a helical membrane-spanning segment; the sequence is LSTLLLCLSNLMFLPPVVLAI. Residues 255–257 are Cytoplasmic-facing; sequence RSR. A helical membrane pass occupies residues 258–277; sequence YVLEAAVYTFTMFFSTFYHA. The Extracellular portion of the chain corresponds to 278 to 292; the sequence is CDQPGIVVFCIMDYD. Residues 293-313 form a helical membrane-spanning segment; the sequence is VLQFCDFLGSLMSVWVTVIAM. Topologically, residues 314 to 315 are cytoplasmic; it reads AR. A helical transmembrane segment spans residues 316–336; the sequence is LQPVVKQVLYLLGAMLLSMAL. Topologically, residues 337–342 are extracellular; sequence QLDRHG. The chain crosses the membrane as a helical span at residues 343–363; the sequence is LWNLLGPSLFALGILATAWTV. Over 364–379 the chain is Cytoplasmic; sequence RSVRRRHCYPPTWRRW. A helical transmembrane segment spans residues 380 to 400; the sequence is LFYLCPGSLIAGSAVLLYAFV. The Extracellular segment spans residues 401–405; sequence ETRDN. Residues 406–426 traverse the membrane as a helical segment; sequence YFYIHSIWHMLIAGSVGFLLP. Over 427 to 472 the chain is Cytoplasmic; that stretch reads PRAKTDHGVPSGARARGCGYQLCINEQEELGLVGPGGATVSSICAS.

This sequence belongs to the TMEM8 family. In terms of assembly, isoform 2 (via its cytoplasmic part) interacts with EZR. In terms of processing, isoform 2 is N-glycosylated.

It is found in the cell membrane. It localises to the cytoplasm. The protein localises to the nucleus. The protein resides in the mitochondrion. Its subcellular location is the endoplasmic reticulum. Its function is as follows. May function as a regulator of the EGFR pathway. Probable tumor suppressor which may function in cell growth, proliferation and adhesion. The protein is Transmembrane protein 8B (TMEM8B) of Homo sapiens (Human).